A 178-amino-acid polypeptide reads, in one-letter code: UPF0232 protein cgR_0005 (178 aa).

The interval 16–55 (AMRRNGSVPDLNKNDAFRRPPAPKGGVEKRKKGRASGLDG) is disordered.

The protein belongs to the UPF0232 family.

The polypeptide is UPF0232 protein cgR_0005 (Corynebacterium glutamicum (strain R)).